The sequence spans 224 residues: Ribose-5-phosphate isomerase A (224 aa).

Residues 26–29 (TGST), 81–84 (DGAD), and 94–97 (KGGG) each bind substrate. Catalysis depends on E103, which acts as the Proton acceptor. K121 provides a ligand contact to substrate.

This sequence belongs to the ribose 5-phosphate isomerase family. Homodimer.

It catalyses the reaction aldehydo-D-ribose 5-phosphate = D-ribulose 5-phosphate. Its pathway is carbohydrate degradation; pentose phosphate pathway; D-ribose 5-phosphate from D-ribulose 5-phosphate (non-oxidative stage): step 1/1. In terms of biological role, catalyzes the reversible conversion of ribose-5-phosphate to ribulose 5-phosphate. The protein is Ribose-5-phosphate isomerase A of Listeria monocytogenes serovar 1/2a (strain ATCC BAA-679 / EGD-e).